The chain runs to 948 residues: RNA polymerase-associated protein RapA (948 aa).

The Helicase ATP-binding domain occupies 164–332 (EVADRSAPRV…FARLRLLDPN (169 aa)). Residue 177–184 (DEVGLGKT) participates in ATP binding. The DEAH box signature appears at 278 to 281 (DEAH). In terms of domain architecture, Helicase C-terminal spans 473–627 (RVDWLIDTLK…TCPTGNALQH (155 aa)).

Belongs to the SNF2/RAD54 helicase family. RapA subfamily. In terms of assembly, interacts with the RNAP. Has a higher affinity for the core RNAP than for the holoenzyme. Its ATPase activity is stimulated by binding to RNAP.

Transcription regulator that activates transcription by stimulating RNA polymerase (RNAP) recycling in case of stress conditions such as supercoiled DNA or high salt concentrations. Probably acts by releasing the RNAP, when it is trapped or immobilized on tightly supercoiled DNA. Does not activate transcription on linear DNA. Probably not involved in DNA repair. The chain is RNA polymerase-associated protein RapA from Pseudomonas putida (strain GB-1).